The primary structure comprises 117 residues: Large ribosomal subunit protein bL20 (117 aa).

This sequence belongs to the bacterial ribosomal protein bL20 family.

In terms of biological role, binds directly to 23S ribosomal RNA and is necessary for the in vitro assembly process of the 50S ribosomal subunit. It is not involved in the protein synthesizing functions of that subunit. The protein is Large ribosomal subunit protein bL20 of Campylobacter hominis (strain ATCC BAA-381 / DSM 21671 / CCUG 45161 / LMG 19568 / NCTC 13146 / CH001A).